A 375-amino-acid chain; its full sequence is Probable mitochondrial tRNA-specific 2-thiouridylase 1 (375 aa).

Residues 7 to 14 (GMSGGVDS) and Met-33 contribute to the ATP site. Positions 94-96 (VPD) are interaction with target base in tRNA. Cys-99 acts as the Nucleophile in catalysis. A disulfide bond links Cys-99 and Cys-205. An ATP-binding site is contributed by Gly-124. The interaction with tRNA stretch occupies residues 154–156 (KDQ). Cys-205 serves as the catalytic Cysteine persulfide intermediate. The interval 319–320 (QR) is interaction with tRNA.

It belongs to the MnmA/TRMU family.

The protein resides in the mitochondrion. It catalyses the reaction 5-taurinomethyluridine(34) in tRNA + S-sulfanyl-L-cysteinyl-[protein] + AH2 + ATP = 5-taurinomethyl-2-thiouridine(34) in tRNA + L-cysteinyl-[protein] + A + AMP + diphosphate + H(+). Functionally, catalyzes the 2-thiolation of uridine at the wobble position (U34) of mitochondrial tRNA(Lys), tRNA(Glu) and tRNA(Gln). Required for the formation of 5-taurinomethyl-2-thiouridine (tm5s2U) of mitochondrial tRNA(Lys), tRNA(Glu), and tRNA(Gln) at the wobble position. ATP is required to activate the C2 atom of the wobble base. In Caenorhabditis elegans, this protein is Probable mitochondrial tRNA-specific 2-thiouridylase 1.